Here is a 261-residue protein sequence, read N- to C-terminus: Undecaprenyl-diphosphatase (261 aa).

6 helical membrane passes run 39–59 (NVLL…LIIF), 76–96 (LLII…KDFF), 99–119 (LFVS…ILWL), 173–193 (AAKF…VLDL), 206–226 (IDLM…YFAV), and 238–258 (LTWF…LQAA).

Belongs to the UppP family.

It localises to the cell membrane. It catalyses the reaction di-trans,octa-cis-undecaprenyl diphosphate + H2O = di-trans,octa-cis-undecaprenyl phosphate + phosphate + H(+). Functionally, catalyzes the dephosphorylation of undecaprenyl diphosphate (UPP). Confers resistance to bacitracin. The chain is Undecaprenyl-diphosphatase from Carboxydothermus hydrogenoformans (strain ATCC BAA-161 / DSM 6008 / Z-2901).